A 119-amino-acid polypeptide reads, in one-letter code: MGPESPDSIPPHGPGNGDGDQDLDIGVVVRPRTRTRKPSMYKVLMLNDDYTPMEFVVHVLERFFAKTRDEATSIMLQVHQRGVGICGVFTYEVAESKVTQVMDLARQNQHPLQCTIEKD.

A disordered region spans residues 1-24 (MGPESPDSIPPHGPGNGDGDQDLD).

It belongs to the ClpS family. In terms of assembly, binds to the N-terminal domain of the chaperone ClpA.

Involved in the modulation of the specificity of the ClpAP-mediated ATP-dependent protein degradation. The sequence is that of ATP-dependent Clp protease adapter protein ClpS from Gluconobacter oxydans (strain 621H) (Gluconobacter suboxydans).